The sequence spans 565 residues: Inositol-3-phosphate synthase (565 aa).

NAD(+)-binding residues include glycine 70, glycine 71, asparagine 72, asparagine 73, aspartate 144, serine 180, isoleucine 181, glutamine 191, arginine 194, threonine 231, alanine 232, asparagine 233, threonine 234, glycine 282, serine 283, aspartate 307, serine 310, asparagine 341, asparagine 342, aspartate 343, lysine 356, glycine 394, aspartate 395, aspartate 423, and serine 424. Serine 536 is modified (phosphoserine). The disordered stretch occupies residues 546-565 (LHANGHSNGSAKLATNGNGH). Positions 550 to 565 (GHSNGSAKLATNGNGH) are enriched in polar residues.

Belongs to the myo-inositol 1-phosphate synthase family. The cofactor is NAD(+). Higher expression in adult heads than bodies.

The protein resides in the cytoplasm. The catalysed reaction is D-glucose 6-phosphate = 1D-myo-inositol 3-phosphate. The protein operates within polyol metabolism; myo-inositol biosynthesis; myo-inositol from D-glucose 6-phosphate: step 1/2. Key enzyme in myo-inositol biosynthesis pathway that catalyzes the conversion of glucose 6-phosphate to 1-myo-inositol 1-phosphate in a NAD-dependent manner. Rate-limiting enzyme in the synthesis of all inositol-containing compounds. This is Inositol-3-phosphate synthase (Inos) from Drosophila melanogaster (Fruit fly).